Here is a 258-residue protein sequence, read N- to C-terminus: Acyl-[acyl-carrier-protein]--UDP-N-acetylglucosamine O-acyltransferase (258 aa).

The protein belongs to the transferase hexapeptide repeat family. LpxA subfamily. Homotrimer.

It is found in the cytoplasm. The enzyme catalyses a (3R)-hydroxyacyl-[ACP] + UDP-N-acetyl-alpha-D-glucosamine = a UDP-3-O-[(3R)-3-hydroxyacyl]-N-acetyl-alpha-D-glucosamine + holo-[ACP]. It participates in glycolipid biosynthesis; lipid IV(A) biosynthesis; lipid IV(A) from (3R)-3-hydroxytetradecanoyl-[acyl-carrier-protein] and UDP-N-acetyl-alpha-D-glucosamine: step 1/6. In terms of biological role, involved in the biosynthesis of lipid A, a phosphorylated glycolipid that anchors the lipopolysaccharide to the outer membrane of the cell. The sequence is that of Acyl-[acyl-carrier-protein]--UDP-N-acetylglucosamine O-acyltransferase from Pseudomonas savastanoi pv. phaseolicola (strain 1448A / Race 6) (Pseudomonas syringae pv. phaseolicola (strain 1448A / Race 6)).